The primary structure comprises 84 residues: Small ribosomal subunit protein bS16 (84 aa).

This sequence belongs to the bacterial ribosomal protein bS16 family.

The sequence is that of Small ribosomal subunit protein bS16 from Burkholderia mallei (strain NCTC 10247).